The sequence spans 487 residues: ATP synthase subunit beta 1 (487 aa).

162–169 (GGAGVGKT) lines the ATP pocket.

It belongs to the ATPase alpha/beta chains family. As to quaternary structure, F-type ATPases have 2 components, CF(1) - the catalytic core - and CF(0) - the membrane proton channel. CF(1) has five subunits: alpha(3), beta(3), gamma(1), delta(1), epsilon(1). CF(0) has three main subunits: a(1), b(2) and c(9-12). The alpha and beta chains form an alternating ring which encloses part of the gamma chain. CF(1) is attached to CF(0) by a central stalk formed by the gamma and epsilon chains, while a peripheral stalk is formed by the delta and b chains.

Its subcellular location is the cell inner membrane. It carries out the reaction ATP + H2O + 4 H(+)(in) = ADP + phosphate + 5 H(+)(out). Its function is as follows. Produces ATP from ADP in the presence of a proton gradient across the membrane. The catalytic sites are hosted primarily by the beta subunits. The polypeptide is ATP synthase subunit beta 1 (Gluconobacter oxydans (strain 621H) (Gluconobacter suboxydans)).